Reading from the N-terminus, the 236-residue chain is Ubiquinone biosynthesis O-methyltransferase (236 aa).

S-adenosyl-L-methionine is bound by residues arginine 39, glycine 59, aspartate 80, and methionine 124.

The protein belongs to the methyltransferase superfamily. UbiG/COQ3 family.

It catalyses the reaction a 3-demethylubiquinol + S-adenosyl-L-methionine = a ubiquinol + S-adenosyl-L-homocysteine + H(+). The catalysed reaction is a 3-(all-trans-polyprenyl)benzene-1,2-diol + S-adenosyl-L-methionine = a 2-methoxy-6-(all-trans-polyprenyl)phenol + S-adenosyl-L-homocysteine + H(+). Its pathway is cofactor biosynthesis; ubiquinone biosynthesis. Its function is as follows. O-methyltransferase that catalyzes the 2 O-methylation steps in the ubiquinone biosynthetic pathway. The protein is Ubiquinone biosynthesis O-methyltransferase of Pseudoalteromonas translucida (strain TAC 125).